Reading from the N-terminus, the 92-residue chain is Acyl-CoA-binding domain-containing protein 6 (92 aa).

Residues 3–88 (LKEEFEEHAE…VKQLLEVAAS (86 aa)) form the ACB domain. Residues 30 to 34 (YGLYK), Lys52, Lys56, and Tyr75 each bind an acyl-CoA.

It belongs to the ACBP family. Interacts with PDLP8. As to expression, mostly expressed in seeds, stems, and siliques, and, to a lower extent, in leaves, flowers, and roots (at protein level). Highly expressed in root and shoot phloem companion cells.

The protein resides in the cytoplasm. Its subcellular location is the cell membrane. Its function is as follows. Binds medium- and long-chain acyl-CoA esters with very high affinity. May function as an intracellular carrier of acyl-CoA esters. Confers resistance to cold and freezing. Interacts with phosphatidylcholine and derivatives, but not phosphatidic acid and lysophosphatidylcholine. May be involved in phospholipid metabolism. The polypeptide is Acyl-CoA-binding domain-containing protein 6 (ACBP6) (Arabidopsis thaliana (Mouse-ear cress)).